A 322-amino-acid polypeptide reads, in one-letter code: Acetylglutamate kinase (322 aa).

Residues 89–90 (GG), Arg111, and Asn217 contribute to the substrate site.

Belongs to the acetylglutamate kinase family. ArgB subfamily.

The protein localises to the cytoplasm. The enzyme catalyses N-acetyl-L-glutamate + ATP = N-acetyl-L-glutamyl 5-phosphate + ADP. The protein operates within amino-acid biosynthesis; L-arginine biosynthesis; N(2)-acetyl-L-ornithine from L-glutamate: step 2/4. Functionally, catalyzes the ATP-dependent phosphorylation of N-acetyl-L-glutamate. The sequence is that of Acetylglutamate kinase from Ehrlichia ruminantium (strain Gardel).